Here is a 416-residue protein sequence, read N- to C-terminus: Multifunctional CCA protein (416 aa).

Gly8 and Arg11 together coordinate ATP. Residues Gly8 and Arg11 each coordinate CTP. The Mg(2+) site is built by Asp21 and Asp23. 3 residues coordinate ATP: Arg91, Arg137, and Arg140. The CTP site is built by Arg91, Arg137, and Arg140. An HD domain is found at 228 to 335 (SFIHTMLVLK…ITLFNRFDVW (108 aa)).

The protein belongs to the tRNA nucleotidyltransferase/poly(A) polymerase family. Bacterial CCA-adding enzyme type 1 subfamily. As to quaternary structure, monomer. Can also form homodimers and oligomers. It depends on Mg(2+) as a cofactor. Ni(2+) serves as cofactor.

The enzyme catalyses a tRNA precursor + 2 CTP + ATP = a tRNA with a 3' CCA end + 3 diphosphate. It carries out the reaction a tRNA with a 3' CCA end + 2 CTP + ATP = a tRNA with a 3' CCACCA end + 3 diphosphate. Functionally, catalyzes the addition and repair of the essential 3'-terminal CCA sequence in tRNAs without using a nucleic acid template. Adds these three nucleotides in the order of C, C, and A to the tRNA nucleotide-73, using CTP and ATP as substrates and producing inorganic pyrophosphate. tRNA 3'-terminal CCA addition is required both for tRNA processing and repair. Also involved in tRNA surveillance by mediating tandem CCA addition to generate a CCACCA at the 3' terminus of unstable tRNAs. While stable tRNAs receive only 3'-terminal CCA, unstable tRNAs are marked with CCACCA and rapidly degraded. In Haemophilus influenzae (strain PittGG), this protein is Multifunctional CCA protein.